Here is a 497-residue protein sequence, read N- to C-terminus: Putative diacyglycerol O-acyltransferase Rv3480c (497 aa).

The Proton acceptor role is filled by histidine 143.

It belongs to the long-chain O-acyltransferase family.

It carries out the reaction an acyl-CoA + a 1,2-diacyl-sn-glycerol = a triacyl-sn-glycerol + CoA. The enzyme catalyses di-(9Z)-octadecenoylglycerol + (9Z)-octadecenoyl-CoA = 1,2,3-tri-(9Z-octadecenoyl)-glycerol + CoA. It catalyses the reaction hexadecan-1-ol + hexadecanoyl-CoA = hexadecanyl hexadecanoate + CoA. It functions in the pathway glycerolipid metabolism; triacylglycerol biosynthesis. In terms of biological role, upon expression in E.coli has a weak triacylglycerol synthase function, making triacylglycerol (TG) from diolein and long-chain fatty acyl-CoA. Also functions weakly as a wax synthase, as it incorporates palmityl alcohol into wax esters in the presence of palmitoyl-CoA. This Mycobacterium tuberculosis (strain ATCC 25618 / H37Rv) protein is Putative diacyglycerol O-acyltransferase Rv3480c.